The chain runs to 304 residues: Glutaminase (304 aa).

Substrate-binding residues include Ser63, Asn113, Glu157, Asn164, Tyr188, Tyr240, and Val258.

The protein belongs to the glutaminase family. Homotetramer.

It catalyses the reaction L-glutamine + H2O = L-glutamate + NH4(+). This Christiangramia forsetii (strain DSM 17595 / CGMCC 1.15422 / KT0803) (Gramella forsetii) protein is Glutaminase.